The sequence spans 199 residues: MSRVLIIESSARQQDSVSRQLTQTFIQQWQAAHPGDSITVRDLARNPVPHLDANLLGGWMKPAEQRSAAEQDSLQRSNELTEELLAADVLVMAAPMYNFAIPSTLKAWLDHVLRAGVTFKYTDTGPQGLLTGKRAYVLTARGGIYAGSTADHQEPYLRQVMGFIGIHDVEFIHAEGLNLGGDFHEKGLNQANAKLAQVA.

FMN is bound by residues Ser10, Ser16–Ser18, and Met96–Phe99.

It belongs to the azoreductase type 1 family. Homodimer. The cofactor is FMN.

It carries out the reaction 2 a quinone + NADH + H(+) = 2 a 1,4-benzosemiquinone + NAD(+). The catalysed reaction is N,N-dimethyl-1,4-phenylenediamine + anthranilate + 2 NAD(+) = 2-(4-dimethylaminophenyl)diazenylbenzoate + 2 NADH + 2 H(+). Quinone reductase that provides resistance to thiol-specific stress caused by electrophilic quinones. Its function is as follows. Also exhibits azoreductase activity. Catalyzes the reductive cleavage of the azo bond in aromatic azo compounds to the corresponding amines. This chain is FMN-dependent NADH:quinone oxidoreductase 2, found in Pseudomonas fluorescens (strain ATCC BAA-477 / NRRL B-23932 / Pf-5).